A 216-amino-acid polypeptide reads, in one-letter code: Thiopurine S-methyltransferase (216 aa).

Residues Trp-10, Leu-45, Glu-66, and Arg-123 each coordinate S-adenosyl-L-methionine.

The protein belongs to the class I-like SAM-binding methyltransferase superfamily. TPMT family.

The protein resides in the cytoplasm. The enzyme catalyses S-adenosyl-L-methionine + a thiopurine = S-adenosyl-L-homocysteine + a thiopurine S-methylether.. This Pseudomonas putida (strain GB-1) protein is Thiopurine S-methyltransferase.